The sequence spans 765 residues: Probable serine/threonine-protein kinase DDB_G0271402 (765 aa).

Residues 35–328 (LEFGQEIGKG…KEITERLKSL (294 aa)) form the Protein kinase domain. ATP-binding positions include 41–49 (IGKGAYGKI) and Lys62. Asp192 functions as the Proton acceptor in the catalytic mechanism. Disordered stretches follow at residues 371 to 393 (IVHNNHNHSSSSNNSSGYNNNSN), 443 to 477 (SMGDESDLDSDDEDDSYTSSASSSRCNSRNGKIIN), 491 to 527 (SSDLESSPNGNNINNNNNNNNNNNNNNNNNNNNNNNS), 545 to 620 (PIQI…QQYQ), 654 to 684 (PLNISPTQNNNNNNNNSNNNNGNVNHNHHHL), 699 to 738 (IISSSSTTSSSTSTPSLVSLTSSRDHHHHHISVTSSPTNI), and 746 to 765 (ASNSSVFTPLGSGLTRTVQS). Over residues 446–458 (DESDLDSDDEDDS) the composition is skewed to acidic residues. Low complexity-rich tracts occupy residues 459 to 470 (YTSSASSSRCNS), 499 to 527 (NGNNINNNNNNNNNNNNNNNNNNNNNNNS), 562 to 605 (PPTS…PKSN), 662 to 678 (NNNNNNNNSNNNNGNVN), and 699 to 720 (IISSSSTTSSSTSTPSLVSLTS).

Belongs to the protein kinase superfamily. TKL Ser/Thr protein kinase family.

The enzyme catalyses L-seryl-[protein] + ATP = O-phospho-L-seryl-[protein] + ADP + H(+). The catalysed reaction is L-threonyl-[protein] + ATP = O-phospho-L-threonyl-[protein] + ADP + H(+). This Dictyostelium discoideum (Social amoeba) protein is Probable serine/threonine-protein kinase DDB_G0271402.